The sequence spans 146 residues: Villin-like protein ABP41 (146 aa).

This sequence belongs to the villin/gelsolin family. Binds to actin. As to expression, expressed in pollen (at protein level).

It is found in the cytoplasm. Its subcellular location is the cytoskeleton. Functionally, ca(2+)-dependent actin filament-severing protein that is required for pollen tube growth. Probably regulates the dynamics of the actin cytoskeleton. It can promote the assembly of monomers into filaments (nucleation) as well as sever filaments already formed. This chain is Villin-like protein ABP41, found in Lilium davidii (David's lily).